Here is a 498-residue protein sequence, read N- to C-terminus: ATP synthase subunit beta, chloroplastic (498 aa).

Residue threonine 6 is modified to Phosphothreonine. A Phosphoserine modification is found at serine 13. 172 to 179 (GGAGVGKT) serves as a coordination point for ATP.

This sequence belongs to the ATPase alpha/beta chains family. F-type ATPases have 2 components, CF(1) - the catalytic core - and CF(0) - the membrane proton channel. CF(1) has five subunits: alpha(3), beta(3), gamma(1), delta(1), epsilon(1). CF(0) has four main subunits: a(1), b(1), b'(1) and c(9-12).

The protein resides in the plastid. It localises to the chloroplast thylakoid membrane. It carries out the reaction ATP + H2O + 4 H(+)(in) = ADP + phosphate + 5 H(+)(out). Produces ATP from ADP in the presence of a proton gradient across the membrane. The catalytic sites are hosted primarily by the beta subunits. The polypeptide is ATP synthase subunit beta, chloroplastic (Raphanus sativus (Radish)).